Here is a 426-residue protein sequence, read N- to C-terminus: Tol-Pal system protein TolB (426 aa).

The N-terminal stretch at 1 to 25 (MSITPSLSRRTVMSLLAAGLSPAFA) is a signal peptide.

The protein belongs to the TolB family. In terms of assembly, the Tol-Pal system is composed of five core proteins: the inner membrane proteins TolA, TolQ and TolR, the periplasmic protein TolB and the outer membrane protein Pal. They form a network linking the inner and outer membranes and the peptidoglycan layer.

The protein resides in the periplasm. Its function is as follows. Part of the Tol-Pal system, which plays a role in outer membrane invagination during cell division and is important for maintaining outer membrane integrity. The polypeptide is Tol-Pal system protein TolB (Polaromonas sp. (strain JS666 / ATCC BAA-500)).